The primary structure comprises 260 residues: Opacity protein opA58 (260 aa).

Positions methionine 1–alanine 23 are cleaved as a signal peptide.

Belongs to the opacity porin family.

It localises to the cell outer membrane. Functionally, implicated in a number of adherence functions. OPA proteins are implicated in pathogenesis and are subject to phase variation. The chain is Opacity protein opA58 (opaJ) from Neisseria gonorrhoeae.